Consider the following 293-residue polypeptide: Ribosomal RNA small subunit methyltransferase A (293 aa).

Positions 38, 40, 65, 86, 116, and 133 each coordinate S-adenosyl-L-methionine.

Belongs to the class I-like SAM-binding methyltransferase superfamily. rRNA adenine N(6)-methyltransferase family. RsmA subfamily.

The protein localises to the cytoplasm. It catalyses the reaction adenosine(1518)/adenosine(1519) in 16S rRNA + 4 S-adenosyl-L-methionine = N(6)-dimethyladenosine(1518)/N(6)-dimethyladenosine(1519) in 16S rRNA + 4 S-adenosyl-L-homocysteine + 4 H(+). Its function is as follows. Specifically dimethylates two adjacent adenosines (A1518 and A1519) in the loop of a conserved hairpin near the 3'-end of 16S rRNA in the 30S particle. May play a critical role in biogenesis of 30S subunits. This chain is Ribosomal RNA small subunit methyltransferase A, found in Paenarthrobacter aurescens (strain TC1).